We begin with the raw amino-acid sequence, 244 residues long: THO complex subunit 4A (244 aa).

Residues 1 to 82 (MSTGLDMSLD…EDHRSGRSSA (82 aa)) are disordered. An N-acetylserine modification is found at Ser-2. The segment covering 21-35 (GGAGPARGTGSGSGP) has biased composition (gly residues). Over residues 67 to 77 (MFSDRSEDHRS) the composition is skewed to basic and acidic residues. The 78-residue stretch at 88–165 (TKLYISNLDY…KPMKIEIVGT (78 aa)) folds into the RRM domain. The segment at 169 to 244 (TAAAPSGRPA…KYHSGDMETN (76 aa)) is disordered. A compositionally biased stretch (gly residues) spans 187 to 211 (WRGGQGRGGQQRGGGRGGGGRGGGG). Basic and acidic residues predominate over residues 220–244 (PAEKISAEDLDADLDKYHSGDMETN).

The protein belongs to the ALYREF family.

The protein resides in the nucleus. It localises to the nucleoplasm. It is found in the nucleolus. In terms of biological role, export adapter involved in nuclear export of spliced and unspliced mRNA. This chain is THO complex subunit 4A (ALY1), found in Arabidopsis thaliana (Mouse-ear cress).